A 1509-amino-acid chain; its full sequence is Myosin-2 heavy chain, non muscle (1509 aa).

One can recognise a Myosin N-terminal SH3-like domain in the interval 32 to 85; sequence SDKTLAWWPTKDADRAFCHVEVTKDDGKNFTVRLENGEEKSQPKNEKNFLGVNP. One can recognise a Myosin motor domain in the interval 89 to 787; the sequence is DGVEDMGELG…QLAAIEELRE (699 aa). Position 133 is an N6,N6,N6-trimethyllysine (Lys133). 182–189 is an ATP binding site; the sequence is GESGAGKT. The disordered stretch occupies residues 623 to 643; the sequence is APAEEEKAAAGGSRNRSTGRG. Actin-binding regions lie at residues 660–682 and 766–780; these read LAHL…IPNL and RFGV…GQLA. The region spanning 790-819 is the IQ domain; the sequence is ISKMVVSIQAGARAFLARRMYDKMREQTVS. The interval 848–1226 is alpha-helical tailpiece (S2); that stretch reads LISQRNFQKE…AERDSGAQQR (379 aa). The stretch at 848–1509 forms a coiled coil; sequence LISQRNFQKE…VRAGSARAEE (662 aa). Basic and acidic residues-rich tracts occupy residues 958–1019, 1034–1047, 1097–1107, 1115–1141, and 1179–1189; these read ELKA…KDAL, KNTE…RNEL, EDARSEVDSLK, KSLK…RANV, and QVDETKRRLEE. Disordered regions lie at residues 958-1049, 1068-1141, 1170-1195, 1213-1259, 1352-1425, and 1474-1509; these read ELKA…ELDD, LAQT…RANV, AAQA…ASAA, ADLD…RLEG, VAKE…NREL, and QLQD…RAEE. A hinge region spans residues 1227-1252; that stretch reads RKLNTRISELQSELENAPKTGGASSE. Residues 1231 to 1240 are compositionally biased toward polar residues; that stretch reads TRISELQSEL. The alpha-helical tailpiece (LMM) stretch occupies residues 1253 to 1482; that stretch reads EVKRLEGELE…AQLQDEIDGT (230 aa). Residues 1253–1509 form a light meromyosin (LMM) region; it reads EVKRLEGELE…VRAGSARAEE (257 aa). The nonhelical tailpiece stretch occupies residues 1483 to 1509; sequence PSSRGGSTRGASARGASVRAGSARAEE. Residues 1484–1509 are compositionally biased toward low complexity; sequence SSRGGSTRGASARGASVRAGSARAEE. A phosphoserine mark is found at Ser1489, Ser1494, and Ser1499.

It belongs to the TRAFAC class myosin-kinesin ATPase superfamily. Myosin family. In terms of assembly, myosin II heavy chain is two-headed. It self-assembles into filaments. Hexamer of 2 heavy chain subunits (MHC), 2 alkali light chain subunits (MLC) and 2 regulatory light chain subunits (MLC-2).

Functionally, myosin is a protein that binds to F-actin and has ATPase activity that is activated by F-actin. The protein is Myosin-2 heavy chain, non muscle of Acanthamoeba castellanii (Amoeba).